We begin with the raw amino-acid sequence, 426 residues long: Glutamate-1-semialdehyde 2,1-aminomutase (426 aa).

At Lys-265 the chain carries N6-(pyridoxal phosphate)lysine.

This sequence belongs to the class-III pyridoxal-phosphate-dependent aminotransferase family. HemL subfamily. In terms of assembly, homodimer. Pyridoxal 5'-phosphate serves as cofactor.

The protein localises to the cytoplasm. The enzyme catalyses (S)-4-amino-5-oxopentanoate = 5-aminolevulinate. It participates in porphyrin-containing compound metabolism; protoporphyrin-IX biosynthesis; 5-aminolevulinate from L-glutamyl-tRNA(Glu): step 2/2. The sequence is that of Glutamate-1-semialdehyde 2,1-aminomutase from Sodalis glossinidius (strain morsitans).